A 381-amino-acid polypeptide reads, in one-letter code: Probable peptidoglycan glycosyltransferase FtsW (381 aa).

Helical transmembrane passes span 16-36, 56-76, 80-100, 145-165, 168-188, 191-211, 274-294, 312-332, and 343-363; these read LVLL…VYSA, LIFA…DYQL, WAVP…IPGI, LLSA…GLLL, PDMG…FAAG, LIFI…LVVH, VIGE…FFIL, FLAL…MAVV, and LPFL…VGIL.

This sequence belongs to the SEDS family. FtsW subfamily.

It is found in the cell inner membrane. It carries out the reaction [GlcNAc-(1-&gt;4)-Mur2Ac(oyl-L-Ala-gamma-D-Glu-L-Lys-D-Ala-D-Ala)](n)-di-trans,octa-cis-undecaprenyl diphosphate + beta-D-GlcNAc-(1-&gt;4)-Mur2Ac(oyl-L-Ala-gamma-D-Glu-L-Lys-D-Ala-D-Ala)-di-trans,octa-cis-undecaprenyl diphosphate = [GlcNAc-(1-&gt;4)-Mur2Ac(oyl-L-Ala-gamma-D-Glu-L-Lys-D-Ala-D-Ala)](n+1)-di-trans,octa-cis-undecaprenyl diphosphate + di-trans,octa-cis-undecaprenyl diphosphate + H(+). It functions in the pathway cell wall biogenesis; peptidoglycan biosynthesis. Functionally, peptidoglycan polymerase that is essential for cell division. The polypeptide is Probable peptidoglycan glycosyltransferase FtsW (Trichlorobacter lovleyi (strain ATCC BAA-1151 / DSM 17278 / SZ) (Geobacter lovleyi)).